Reading from the N-terminus, the 533-residue chain is D-2-hydroxyglutarate dehydrogenase, mitochondrial (533 aa).

The N-terminal 55 residues, 1–55 (MGLFQKCSRLSLRSSYMWSVCPQYSIAVTARETPDRALIVHWTQHRDVHNSRRLG), are a transit peptide targeting the mitochondrion. The FAD-binding PCMH-type domain occupies 107 to 286 (VQGSSDVLLR…TAVSILCPRK (180 aa)). Arg397, Thr401, and Lys412 together coordinate (R)-2-hydroxyglutarate. Position 397 (Arg397) interacts with (R)-lactate. Residues Arg397, Thr401, and Lys412 each coordinate (R)-malate. 2 residues coordinate Zn(2+): His445 and His452. (R)-2-hydroxyglutarate is bound at residue Asn454. A Zn(2+)-binding site is contributed by Glu486. His487 contacts (R)-2-hydroxyglutarate. (R)-lactate is bound at residue His487. His487 contacts (R)-malate.

Belongs to the FAD-binding oxidoreductase/transferase type 4 family. FAD serves as cofactor.

The protein localises to the mitochondrion. It catalyses the reaction (R)-2-hydroxyglutarate + A = 2-oxoglutarate + AH2. It carries out the reaction (R)-malate + A = oxaloacetate + AH2. In terms of biological role, catalyzes the oxidation of D-2-hydroxyglutarate (D-2-HG) to alpha-ketoglutarate. Also catalyzes the oxidation of other D-2-hydroxyacids, such as D-malate (D-MAL) and D-lactate (D-LAC). Exhibits high activities towards D-2-HG and D-MAL but a very weak activity towards D-LAC. This chain is D-2-hydroxyglutarate dehydrogenase, mitochondrial (d2hgdh), found in Danio rerio (Zebrafish).